The chain runs to 112 residues: MTPGELFTDGPDHVLNAGRRTLTLVVQNTADRPIQVGSHYHFAETNAALGFDRQAAHGMRLNIASGTAVRFEPGQQRTVELVDYAGERKVFGFRGLVQGGLDASGQSHKETT.

Belongs to the urease beta subunit family. As to quaternary structure, heterotrimer of UreA (gamma), UreB (beta) and UreC (alpha) subunits. Three heterotrimers associate to form the active enzyme.

The protein resides in the cytoplasm. It catalyses the reaction urea + 2 H2O + H(+) = hydrogencarbonate + 2 NH4(+). Its pathway is nitrogen metabolism; urea degradation; CO(2) and NH(3) from urea (urease route): step 1/1. The chain is Urease subunit beta from Polaromonas sp. (strain JS666 / ATCC BAA-500).